We begin with the raw amino-acid sequence, 363 residues long: Flagellar P-ring protein (363 aa).

Residues 1–18 (MWKKVLIAIVFITSFSFA) form the signal peptide.

Belongs to the FlgI family. As to quaternary structure, the basal body constitutes a major portion of the flagellar organelle and consists of four rings (L,P,S, and M) mounted on a central rod.

It is found in the periplasm. The protein localises to the bacterial flagellum basal body. In terms of biological role, assembles around the rod to form the L-ring and probably protects the motor/basal body from shearing forces during rotation. The chain is Flagellar P-ring protein from Sulfurihydrogenibium sp. (strain YO3AOP1).